Here is a 500-residue protein sequence, read N- to C-terminus: NAD(P)H-quinone oxidoreductase chain 4, chloroplastic (500 aa).

14 helical membrane-spanning segments follow: residues 4–24 (FPWLTILVVLPIFAGSLIFFL), 37–57 (ISICLLEFLLMTYAFCYHFQL), 87–107 (VGSILLTGFITTLATLAAWPV), 113–130 (LFYFLMLAMYSGQIGLFS), 134–154 (LLLFFIMWELELIPVYLLLSM), 167–187 (FILYTAGGSIFFLIGVLGMGL), 211–231 (ILLYFGFLIAYAVKLPIIPLH), 242–262 (HYSTCMLLAGILLKMGAYGLI), 272–292 (AHYLFSPWLVIIGAIQIIYAA), 313–333 (MGFIIIGIGSITNIGLNGAIL), 334–354 (QILSHGFIGATLFFLAGTASD), 386–406 (LALPGMSGFVAELVVFFGLIT), 417–437 (LITFVMAIGMILTPIYLLSML), and 462–482 (LFILICIFLPVIGIGIYPDLV).

It belongs to the complex I subunit 4 family.

It localises to the plastid. Its subcellular location is the chloroplast thylakoid membrane. It catalyses the reaction a plastoquinone + NADH + (n+1) H(+)(in) = a plastoquinol + NAD(+) + n H(+)(out). The enzyme catalyses a plastoquinone + NADPH + (n+1) H(+)(in) = a plastoquinol + NADP(+) + n H(+)(out). The protein is NAD(P)H-quinone oxidoreductase chain 4, chloroplastic of Agrostis stolonifera (Creeping bentgrass).